We begin with the raw amino-acid sequence, 2430 residues long: Spatacsin (2430 aa).

Ser1942 and Ser1943 each carry phosphoserine.

As to quaternary structure, interacts with AP5Z1, AP5B1, AP5S1 and ZFYVE26. As to expression, ubiquitously expressed at low level. Expressed in embryonic and adult cortical projection neurons.

The protein localises to the cytoplasm. Its subcellular location is the cytosol. It localises to the nucleus. The protein resides in the cell projection. It is found in the axon. The protein localises to the dendrite. Its subcellular location is the synapse. May play a role in neurite plasticity by maintaining cytoskeleton stability and regulating synaptic vesicle transport. In Mus musculus (Mouse), this protein is Spatacsin (Spg11).